Reading from the N-terminus, the 123-residue chain is Small ribosomal subunit protein uS13 (123 aa).

Residues 95–123 (GLPVRGQSSKTNARTRKGPRRSVMSRKKK) form a disordered region. The segment covering 107–123 (ARTRKGPRRSVMSRKKK) has biased composition (basic residues).

It belongs to the universal ribosomal protein uS13 family. As to quaternary structure, part of the 30S ribosomal subunit. Forms a loose heterodimer with protein S19. Forms two bridges to the 50S subunit in the 70S ribosome.

Located at the top of the head of the 30S subunit, it contacts several helices of the 16S rRNA. In the 70S ribosome it contacts the 23S rRNA (bridge B1a) and protein L5 of the 50S subunit (bridge B1b), connecting the 2 subunits; these bridges are implicated in subunit movement. Contacts the tRNAs in the A and P-sites. In Maridesulfovibrio salexigens (strain ATCC 14822 / DSM 2638 / NCIMB 8403 / VKM B-1763) (Desulfovibrio salexigens), this protein is Small ribosomal subunit protein uS13.